The primary structure comprises 494 residues: Cytochrome P450 71D94 (494 aa).

The chain crosses the membrane as a helical; Signal-anchor for type II membrane protein span at residues 1-21; sequence MELNLLLVIIILVATYTVSLL. Cys434 contributes to the heme binding site.

This sequence belongs to the cytochrome P450 family. The cofactor is heme.

Its subcellular location is the endoplasmic reticulum membrane. Cytochrome P450 oxygenase of undefined substrate. Not active with limonene, (+)- or (-)-piperitone, (-)-isopiperitone, piperitenone or (+)-pulegone. This is Cytochrome P450 71D94 (CYP71D94) from Mentha gracilis (Gingermint).